The chain runs to 83 residues: Small ribosomal subunit protein bS20 (83 aa).

It belongs to the bacterial ribosomal protein bS20 family.

Binds directly to 16S ribosomal RNA. This chain is Small ribosomal subunit protein bS20, found in Staphylococcus haemolyticus (strain JCSC1435).